The following is a 131-amino-acid chain: Small ribosomal subunit protein uS8 (131 aa).

Belongs to the universal ribosomal protein uS8 family. Part of the 30S ribosomal subunit. Contacts proteins S5 and S12.

Its function is as follows. One of the primary rRNA binding proteins, it binds directly to 16S rRNA central domain where it helps coordinate assembly of the platform of the 30S subunit. This chain is Small ribosomal subunit protein uS8, found in Hyphomonas neptunium (strain ATCC 15444).